The chain runs to 509 residues: Maturase K (509 aa).

This sequence belongs to the intron maturase 2 family. MatK subfamily.

It localises to the plastid. The protein localises to the chloroplast. Its function is as follows. Usually encoded in the trnK tRNA gene intron. Probably assists in splicing its own and other chloroplast group II introns. In Anthocercis angustifolia (Narrow-leaf ray-flower), this protein is Maturase K.